The chain runs to 233 residues: Large ribosomal subunit protein uL1 (233 aa).

This sequence belongs to the universal ribosomal protein uL1 family. In terms of assembly, part of the 50S ribosomal subunit.

Binds directly to 23S rRNA. The L1 stalk is quite mobile in the ribosome, and is involved in E site tRNA release. In terms of biological role, protein L1 is also a translational repressor protein, it controls the translation of the L11 operon by binding to its mRNA. The polypeptide is Large ribosomal subunit protein uL1 (Shewanella denitrificans (strain OS217 / ATCC BAA-1090 / DSM 15013)).